The sequence spans 187 residues: Large ribosomal subunit protein uL22 (187 aa).

It belongs to the universal ribosomal protein uL22 family.

The chain is Large ribosomal subunit protein uL22 (RPL17) from Theileria parva (East coast fever infection agent).